Reading from the N-terminus, the 786-residue chain is Cas scaffolding protein family member 4 (786 aa).

Residues 11 to 73 form the SH3 domain; that stretch reads PKALLARALY…PANRLQILTE (63 aa). Ser200 and Ser249 each carry phosphoserine. The tract at residues 262-295 is disordered; the sequence is SFAEESRPHALPSSSSTFYNPPSGRSRSLTPQLN. Residues 273 to 295 are compositionally biased toward polar residues; sequence PSSSSTFYNPPSGRSRSLTPQLN. Position 305 is a phosphoserine (Ser305). 2 disordered regions span residues 361–429 and 612–670; these read QAGK…SEES and IQPP…ERKP. Positions 364–373 are enriched in basic and acidic residues; that stretch reads KELEKAKEVS. Residues 374–391 are compositionally biased toward polar residues; the sequence is ENSAGHNSSWFSRRTTSP. Residues Ser376 and Ser390 each carry the phosphoserine modification. The segment covering 399–427 has biased composition (low complexity); sequence SGSSSDSRASIVSSCSTTSTDDSSSSSSE. Residues 630–642 are compositionally biased toward basic and acidic residues; the sequence is KQREDEHSSELLK.

Belongs to the CAS family. In terms of assembly, interacts (via SH3 domain) with PTK2/FAK1 (via C-terminus). Post-translationally, phosphorylated on tyrosines by SRC. Expressed abundantly in lung and spleen. Also highly expressed in ovarian and leukemia cell lines.

It is found in the cytoplasm. The protein localises to the cytoskeleton. The protein resides in the cell junction. Its subcellular location is the focal adhesion. Docking protein that plays a role in tyrosine kinase-based signaling related to cell adhesion and cell spreading. Regulates PTK2/FAK1 activity, focal adhesion integrity, and cell spreading. The chain is Cas scaffolding protein family member 4 (CASS4) from Homo sapiens (Human).